The chain runs to 61 residues: Phospholipase A2 (61 aa).

The Ca(2+) site is built by Y27, G29, and G31. Residues C28 and C35 are joined by a disulfide bond. The active site involves H38. D39 is a Ca(2+) binding site. C41 and C59 are disulfide-bonded. D60 is a catalytic residue.

The protein belongs to the phospholipase A2 family. Group II subfamily. D49 sub-subfamily. In terms of assembly, homodimer. Requires Ca(2+) as cofactor. Expressed by the venom gland.

The protein resides in the secreted. The enzyme catalyses a 1,2-diacyl-sn-glycero-3-phosphocholine + H2O = a 1-acyl-sn-glycero-3-phosphocholine + a fatty acid + H(+). Snake venom phospholipase A2 (PLA2) that displays edema-inducing activities. PLA2 catalyzes the calcium-dependent hydrolysis of the 2-acyl groups in 3-sn-phosphoglycerides. This Crotalus atrox (Western diamondback rattlesnake) protein is Phospholipase A2.